Reading from the N-terminus, the 168-residue chain is Small ribosomal subunit protein uS9 (168 aa).

The segment covering 1–11 (MAQNEELTTEA) has biased composition (low complexity). The disordered stretch occupies residues 1 to 36 (MAQNEELTTEAVEAEENPTSYTSESSAAEAAPKKER).

This sequence belongs to the universal ribosomal protein uS9 family.

The polypeptide is Small ribosomal subunit protein uS9 (Pseudarthrobacter chlorophenolicus (strain ATCC 700700 / DSM 12829 / CIP 107037 / JCM 12360 / KCTC 9906 / NCIMB 13794 / A6) (Arthrobacter chlorophenolicus)).